Here is a 591-residue protein sequence, read N- to C-terminus: Inactive metallocarboxypeptidase ECM14 (591 aa).

The signal sequence occupies residues 1–21; the sequence is MRLFSHLAVLAILACAVPITA. A propeptide spanning residues 22-175 is cleaved from the precursor; that stretch reads IPSFLSNSYP…QTIYESYPSS (154 aa). Positions 203-523 constitute a Peptidase M14 domain; it reads DYQPFSVIVP…NAVMVLGRFL (321 aa). Zn(2+)-binding residues include His265 and Glu268. Substrate is bound by residues 265–268, Arg323, and 340–341; these read HARE and DR. An intrachain disulfide couples Cys334 to Cys357. N-linked (GlcNAc...) asparagine glycosylation is found at Asn350, Asn381, and Asn386. Zn(2+) is bound at residue His397. Residue 398–399 participates in substrate binding; the sequence is SY. Positions 533–591 are disordered; sequence DWEDESQRPKADEDDIPSENELDENDDSWIPYDYRNHDDQNEGEGYDNDEWGFRRRRKR. Acidic residues-rich tracts occupy residues 544–559 and 573–582; these read DEDDIPSENELDENDD and NEGEGYDNDE.

It belongs to the peptidase M14 family. The cofactor is Zn(2+).

It localises to the vacuole. Its subcellular location is the secreted. Inactive carboxypeptidase that may play a role in cell wall organization and biogenesis. This Paracoccidioides brasiliensis (strain Pb18) protein is Inactive metallocarboxypeptidase ECM14 (ECM14).